Consider the following 846-residue polypeptide: Arsenate respiratory reductase molybdopterin-containing subunit ArrA (846 aa).

Positions 1-29 form a signal peptide, tat-type signal; the sequence is MRIKRREFLKASAAVGAVAVASPTLNAFA. Residues 43–99 form the 4Fe-4S Mo/W bis-MGD-type domain; that stretch reads GKWIPSTCQGCTTWCPVEFLFRMAVRSKYAATQLSKANNGYCCVRGHLMLQQLYDPD. The [4Fe-4S] cluster site is built by C50, C53, C57, and C85. R155 serves as a coordination point for arsenite. An arsenate-binding site is contributed by Y156. H179 lines the arsenite pocket. S180 provides a ligand contact to arsenate. Position 183 (C183) interacts with Mo-bis(molybdopterin guanine dinucleotide). K188 contributes to the arsenate binding site. An arsenite-binding site is contributed by Y200.

Belongs to the prokaryotic molybdopterin-containing oxidoreductase family. As to quaternary structure, heterodimer composed of one large subunit (ArrA) and one small subunit (ArrB). [4Fe-4S] cluster is required as a cofactor. Mo-bis(molybdopterin guanine dinucleotide) serves as cofactor. Post-translationally, predicted to be exported by the Tat system. The position of the signal peptide cleavage has been experimentally proven.

It is found in the periplasm. It carries out the reaction arsenite + A + H2O = arsenate + AH2 + H(+). Its function is as follows. Component of the arsenate respiratory reductase (Arr) complex, which catalyzes the reduction of arsenate (As(V)) to arsenite (As(III)). Can use acetate as the electron donor. ArrA is the arsenate-binding subunit. The chain is Arsenate respiratory reductase molybdopterin-containing subunit ArrA from Chrysiogenes arsenatis.